Consider the following 921-residue polypeptide: 2-oxoadipate dehydrogenase complex component E1 (921 aa).

N6-succinyllysine occurs at positions 184 and 189. The tract at residues glycine 300–serine 319 is disordered. An N6-succinyllysine mark is found at lysine 801 and lysine 819.

The protein belongs to the alpha-ketoglutarate dehydrogenase family. As to quaternary structure, the 2-oxoadipate dehydrogenase complex is composed of OADH (2-oxoadipate dehydrogenase; E1a), DLST (dihydrolipoamide succinyltransferase; E2) and DLD (dihydrolipoamide dehydrogenase; E3). E1a functional unit is a dimer. The cofactor is thiamine diphosphate.

The protein localises to the mitochondrion. It carries out the reaction N(6)-[(R)-lipoyl]-L-lysyl-[protein] + 2-oxoadipate + H(+) = N(6)-[(R)-S(8)-glutaryldihydrolipoyl]-L-lysyl-[protein] + CO2. It functions in the pathway amino-acid degradation. Its function is as follows. 2-oxoadipate dehydrogenase (E1a) component of the 2-oxoadipate dehydrogenase complex (OADHC). Participates in the first step, rate limiting for the overall conversion of 2-oxoadipate (alpha-ketoadipate) to glutaryl-CoA and CO(2) catalyzed by the whole OADHC. Catalyzes the irreversible decarboxylation of 2-oxoadipate via the thiamine diphosphate (ThDP) cofactor and subsequent transfer of the decarboxylated acyl intermediate on an oxidized dihydrolipoyl group that is covalently amidated to the E2 enzyme (dihydrolipoyllysine-residue succinyltransferase or DLST). Can catalyze the decarboxylation of 2-oxoglutarate in vitro, but at a much lower rate than 2-oxoadipate. Responsible for the last step of L-lysine, L-hydroxylysine and L-tryptophan catabolism with the common product being 2-oxoadipate. The polypeptide is 2-oxoadipate dehydrogenase complex component E1 (Dhtkd1) (Mus musculus (Mouse)).